The chain runs to 249 residues: Type III pantothenate kinase (249 aa).

Residue 6–13 (DCGNSFIK) participates in ATP binding. Substrate contacts are provided by residues Tyr-93 and 100 to 103 (GMDR). The active-site Proton acceptor is Asp-102. Asp-122 provides a ligand contact to K(+). Residue Thr-125 coordinates ATP. A substrate-binding site is contributed by Thr-181.

This sequence belongs to the type III pantothenate kinase family. Homodimer. Requires NH4(+) as cofactor. K(+) is required as a cofactor.

It localises to the cytoplasm. It carries out the reaction (R)-pantothenate + ATP = (R)-4'-phosphopantothenate + ADP + H(+). It participates in cofactor biosynthesis; coenzyme A biosynthesis; CoA from (R)-pantothenate: step 1/5. Functionally, catalyzes the phosphorylation of pantothenate (Pan), the first step in CoA biosynthesis. This is Type III pantothenate kinase from Pseudomonas putida (strain ATCC 47054 / DSM 6125 / CFBP 8728 / NCIMB 11950 / KT2440).